The following is a 641-amino-acid chain: Packaging protein UL32 homolog (641 aa).

Residues C101, C104, H181, C187, C467, C470, H540, and C547 each coordinate Zn(2+). 2 zinc finger regions span residues 101–187 (CLVC…LHGC) and 467–547 (CLLC…DPMC).

The protein belongs to the herpesviridae UL32 protein family.

It is found in the host cytoplasm. The protein resides in the host nucleus. Its function is as follows. Plays a role in efficient localization of neo-synthesized capsids to nuclear replication compartments, thereby controlling cleavage and packaging of virus genomic DNA. The sequence is that of Packaging protein UL32 homolog (MDV046) from Gallus gallus (Chicken).